A 219-amino-acid polypeptide reads, in one-letter code: Probable GTP-binding protein EngB (219 aa).

The 175-residue stretch at 31-205 (VGVEIAFAGR…LSILNEWCHP (175 aa)) folds into the EngB-type G domain. GTP contacts are provided by residues 39-46 (GRSNAGKS), 66-70 (GRTQL), 84-87 (DLPG), 151-154 (TKSD), and 184-186 (FSA). Residues serine 46 and threonine 68 each contribute to the Mg(2+) site.

The protein belongs to the TRAFAC class TrmE-Era-EngA-EngB-Septin-like GTPase superfamily. EngB GTPase family. Mg(2+) is required as a cofactor.

In terms of biological role, necessary for normal cell division and for the maintenance of normal septation. In Shewanella putrefaciens (strain CN-32 / ATCC BAA-453), this protein is Probable GTP-binding protein EngB.